The chain runs to 148 residues: Glutamyl-tRNA(Gln) amidotransferase subunit C, mitochondrial (148 aa).

It belongs to the GatC family. As to quaternary structure, subunit of the heterotrimeric GatCAB amidotransferase (AdT) complex, composed of A, B and C subunits.

It localises to the mitochondrion. The enzyme catalyses L-glutamyl-tRNA(Gln) + L-glutamine + ATP + H2O = L-glutaminyl-tRNA(Gln) + L-glutamate + ADP + phosphate + H(+). Its function is as follows. Allows the formation of correctly charged Gln-tRNA(Gln) through the transamidation of misacylated Glu-tRNA(Gln) in the mitochondria. The reaction takes place in the presence of glutamine and ATP through an activated gamma-phospho-Glu-tRNA(Gln). The polypeptide is Glutamyl-tRNA(Gln) amidotransferase subunit C, mitochondrial (Drosophila simulans (Fruit fly)).